The sequence spans 440 residues: N-succinylarginine dihydrolase (440 aa).

Residues glycine 17–serine 26, asparagine 108, and histidine 135–arginine 136 contribute to the substrate site. The tract at residues glycine 17–arginine 37 is disordered. The active site involves glutamate 172. Arginine 210 provides a ligand contact to substrate. The active site involves histidine 246. 2 residues coordinate substrate: aspartate 248 and asparagine 358. Cysteine 364 functions as the Nucleophile in the catalytic mechanism.

Belongs to the succinylarginine dihydrolase family. Homodimer.

The catalysed reaction is N(2)-succinyl-L-arginine + 2 H2O + 2 H(+) = N(2)-succinyl-L-ornithine + 2 NH4(+) + CO2. The protein operates within amino-acid degradation; L-arginine degradation via AST pathway; L-glutamate and succinate from L-arginine: step 2/5. Functionally, catalyzes the hydrolysis of N(2)-succinylarginine into N(2)-succinylornithine, ammonia and CO(2). This Myxococcus xanthus (strain DK1622) protein is N-succinylarginine dihydrolase.